Here is a 113-residue protein sequence, read N- to C-terminus: MDGRVQLIKALLALPIRPATRRWRNPIPFPETFDGDTDRLPEFIVQTGSYMFVDENTFSSDALKVTFLITRLTGPALQWVIPYIKKESPLLNDYRGFLAEMKRVFGWEEDEDF.

This sequence belongs to the FAM127 family.

This is Retrotransposon Gag-like protein 8C from Homo sapiens (Human).